We begin with the raw amino-acid sequence, 424 residues long: Cytoplasmic tRNA 2-thiolation protein 2 (424 aa).

The segment at 357–385 is disordered; it reads PAAPETEEEEELSKKAHMEKSQEKTGDAD. Positions 368-385 are enriched in basic and acidic residues; sequence LSKKAHMEKSQEKTGDAD.

It belongs to the CTU2/NCS2 family.

The protein resides in the cytoplasm. It functions in the pathway tRNA modification; 5-methoxycarbonylmethyl-2-thiouridine-tRNA biosynthesis. Its function is as follows. Plays a central role in 2-thiolation of mcm(5)S(2)U at tRNA wobble positions of tRNA(Lys), tRNA(Glu) and tRNA(Gln). May act by forming a heterodimer with NCS6 that ligates sulfur from thiocarboxylated URM1 onto the uridine of tRNAs at wobble position. Prior mcm(5) tRNA modification by the elongator complex is required for 2-thiolation. May also be involved in protein urmylation. The polypeptide is Cytoplasmic tRNA 2-thiolation protein 2 (Yarrowia lipolytica (strain CLIB 122 / E 150) (Yeast)).